The following is a 273-amino-acid chain: Cytochrome b-c1 complex subunit Rieske, mitochondrial (273 aa).

Residues 1–61 (MLRVAGRRLS…PFFVASRGFS (61 aa)) constitute a mitochondrion transit peptide. The tract at residues 25-46 (PLAGAGVPDRDDDSARGRSQPR) is disordered. Topologically, residues 62-110 (STETVVPRNQDAGLADLPATVAAVKNPNPKVVYDEYNHERYPPGDPSKR) are mitochondrial matrix. Residues 111–133 (AFAYFVLSGGRFIYASLLRLLVL) form a helical membrane-spanning segment. Residues 134-273 (KFVLSMSASK…FLEENKLLVG (140 aa)) lie on the Mitochondrial intermembrane side of the membrane. Residues 176–271 (RRRTEDDIKL…YSFLEENKLL (96 aa)) form the Rieske domain. Residues C216, H218, C235, and H238 each contribute to the [2Fe-2S] cluster site. Residues C221 and C237 are joined by a disulfide bond.

Belongs to the Rieske iron-sulfur protein family. As to quaternary structure, component of the ubiquinol-cytochrome c oxidoreductase (cytochrome b-c1 complex, complex III, CIII), a multisubunit enzyme composed of 3 respiratory subunits cytochrome b, cytochrome c1 and Rieske protein, 2 core protein subunits, and several low-molecular weight protein subunits. The complex exists as an obligatory dimer and forms supercomplexes (SCs) in the inner mitochondrial membrane with cytochrome c oxidase (complex IV, CIV). It depends on [2Fe-2S] cluster as a cofactor.

The protein localises to the mitochondrion inner membrane. The enzyme catalyses a quinol + 2 Fe(III)-[cytochrome c](out) = a quinone + 2 Fe(II)-[cytochrome c](out) + 2 H(+)(out). In terms of biological role, component of the ubiquinol-cytochrome c oxidoreductase, a multisubunit transmembrane complex that is part of the mitochondrial electron transport chain which drives oxidative phosphorylation. The respiratory chain contains 3 multisubunit complexes succinate dehydrogenase (complex II, CII), ubiquinol-cytochrome c oxidoreductase (cytochrome b-c1 complex, complex III, CIII) and cytochrome c oxidase (complex IV, CIV), that cooperate to transfer electrons derived from NADH and succinate to molecular oxygen, creating an electrochemical gradient over the inner membrane that drives transmembrane transport and the ATP synthase. The cytochrome b-c1 complex catalyzes electron transfer from ubiquinol to cytochrome c, linking this redox reaction to translocation of protons across the mitochondrial inner membrane, with protons being carried across the membrane as hydrogens on the quinol. In the process called Q cycle, 2 protons are consumed from the matrix, 4 protons are released into the intermembrane space and 2 electrons are passed to cytochrome c. The Rieske protein is a catalytic core subunit containing a [2Fe-2S] iron-sulfur cluster. It cycles between 2 conformational states during catalysis to transfer electrons from the quinol bound in the Q(0) site in cytochrome b to cytochrome c1. The sequence is that of Cytochrome b-c1 complex subunit Rieske, mitochondrial from Zea mays (Maize).